The following is a 322-amino-acid chain: Chromoplast-specific carotenoid-associated protein, chromoplastic (322 aa).

The N-terminal 58 residues, 1–58, are a transit peptide targeting the chromoplast; it reads MAFVSQFNQLPCKTLALNPPQPQLTSKPSVFPIASIGATARAAAGKSLISVRPAFKVR. The segment at 67–88 is disordered; the sequence is GEDKDEKYGDDSSVAVAEKEEE.

This sequence belongs to the PAP/fibrillin family. Expressed in corollas. Not detected in fruits, stems, leaves, and roots.

The protein resides in the plastid. The protein localises to the chromoplast. Functionally, may be involved in carotenoid sequestration within chromoplasts. The protein is Chromoplast-specific carotenoid-associated protein, chromoplastic (CHRC) of Cucumis sativus (Cucumber).